The following is a 769-amino-acid chain: Endothelin-converting enzyme 1 (769 aa).

Topologically, residues 1–67 are cytoplasmic; it reads MRTVWSPLAA…WAARTSVEKR (67 aa). Threonine 24 carries the post-translational modification Phosphothreonine. Residues 68–88 traverse the membrane as a helical; Signal-anchor for type II membrane protein segment; the sequence is LVVLVTLLAAGLVACLAALGI. Residues 89–769 are Extracellular-facing; the sequence is QYQTRTPPVC…MNPHHKCEVW (681 aa). The Peptidase M13 domain maps to 97–769; that stretch reads VCLTEACVSV…MNPHHKCEVW (673 aa). 5 cysteine pairs are disulfide-bonded: cysteine 98–cysteine 103, cysteine 121–cysteine 754, cysteine 129–cysteine 714, cysteine 184–cysteine 434, and cysteine 643–cysteine 766. Asparagine 165, asparagine 186, asparagine 209, asparagine 269, asparagine 315, asparagine 361, asparagine 382, and asparagine 538 each carry an N-linked (GlcNAc...) asparagine glycan. Histidine 606 provides a ligand contact to Zn(2+). Residue glutamate 607 is part of the active site. Histidine 610 serves as a coordination point for Zn(2+). N-linked (GlcNAc...) asparagine glycosylation is found at asparagine 631 and asparagine 650. Glutamate 666 contributes to the Zn(2+) binding site. Aspartate 670 functions as the Proton donor in the catalytic mechanism.

This sequence belongs to the peptidase M13 family. Homodimer; disulfide-linked. Interacts with PPP1R16B. Interacts with TSPAN8; this interaction recruits the endothelin converting enzyme ECE1 to tetraspanin-enriched microdomains and positively modulates its enzymatic activity. Zn(2+) is required as a cofactor.

It is found in the cell membrane. It catalyses the reaction Hydrolysis of the 21-Trp-|-Val-22 bond in big endothelin to form endothelin 1.. With respect to regulation, inhibited by phosphoramidon. Functionally, converts big endothelin-1 to endothelin-1. The sequence is that of Endothelin-converting enzyme 1 (Ece1) from Mus musculus (Mouse).